An 82-amino-acid chain; its full sequence is Small ribosomal subunit protein uS17 (82 aa).

The protein belongs to the universal ribosomal protein uS17 family. In terms of assembly, part of the 30S ribosomal subunit.

Functionally, one of the primary rRNA binding proteins, it binds specifically to the 5'-end of 16S ribosomal RNA. The sequence is that of Small ribosomal subunit protein uS17 from Rhodopseudomonas palustris (strain BisA53).